A 424-amino-acid chain; its full sequence is Satellite RNA 48 kDa protein (424 aa).

Residues 15-78 form a disordered region; it reads TQTRPRIVPK…SNNPGRPSRK (64 aa). Polar residues-rich tracts occupy residues 31–42 and 62–73; these read RTYSRPRSSLSD and NGSQGRCSNNPG.

Belongs to the nepovirus satellite RNA 48 kDa protein family.

This Allium porrum (Leek) protein is Satellite RNA 48 kDa protein.